The chain runs to 397 residues: Elongation factor Tu (397 aa).

Residues 10 to 206 form the tr-type G domain; it reads KPHVNIGTIG…AVDEYIPTPE (197 aa). Positions 19–26 are G1; it reads GHVDHGKT. 19 to 26 contacts GTP; the sequence is GHVDHGKT. T26 provides a ligand contact to Mg(2+). Positions 60–64 are G2; sequence GITIS. Residues 81-84 are G3; it reads DCPG. GTP is bound by residues 81 to 85 and 136 to 139; these read DCPGH and NKAD. The interval 136–139 is G4; that stretch reads NKAD. The G5 stretch occupies residues 174 to 176; that stretch reads SAL.

The protein belongs to the TRAFAC class translation factor GTPase superfamily. Classic translation factor GTPase family. EF-Tu/EF-1A subfamily. In terms of assembly, monomer.

It localises to the cytoplasm. The enzyme catalyses GTP + H2O = GDP + phosphate + H(+). GTP hydrolase that promotes the GTP-dependent binding of aminoacyl-tRNA to the A-site of ribosomes during protein biosynthesis. This Clostridium tetani (strain Massachusetts / E88) protein is Elongation factor Tu.